The sequence spans 365 residues: tRNA-specific 2-thiouridylase MnmA (365 aa).

Residues 14–21 and leucine 40 each bind ATP; that span reads AMSGGVDS. Cysteine 108 serves as the catalytic Nucleophile. A disulfide bridge connects residues cysteine 108 and cysteine 204. Glycine 132 is a binding site for ATP. Positions 154-156 are interaction with tRNA; that stretch reads KDQ. The Cysteine persulfide intermediate role is filled by cysteine 204.

It belongs to the MnmA/TRMU family.

It localises to the cytoplasm. It catalyses the reaction S-sulfanyl-L-cysteinyl-[protein] + uridine(34) in tRNA + AH2 + ATP = 2-thiouridine(34) in tRNA + L-cysteinyl-[protein] + A + AMP + diphosphate + H(+). Functionally, catalyzes the 2-thiolation of uridine at the wobble position (U34) of tRNA, leading to the formation of s(2)U34. The chain is tRNA-specific 2-thiouridylase MnmA from Rickettsia peacockii (strain Rustic).